Reading from the N-terminus, the 100-residue chain is NADH-quinone oxidoreductase subunit K (100 aa).

The next 3 membrane-spanning stretches (helical) occupy residues 4–24 (LSYSLSLAAILFMLGLTGIMI), 29–49 (LFLLLGLEIMINAAALAFVIV), and 60–80 (VMYILTVTIAATEASIGLALL).

It belongs to the complex I subunit 4L family. NDH-1 is composed of 14 different subunits. Subunits NuoA, H, J, K, L, M, N constitute the membrane sector of the complex.

The protein resides in the cell membrane. The enzyme catalyses a quinone + NADH + 5 H(+)(in) = a quinol + NAD(+) + 4 H(+)(out). In terms of biological role, NDH-1 shuttles electrons from NADH, via FMN and iron-sulfur (Fe-S) centers, to quinones in the respiratory chain. The immediate electron acceptor for the enzyme in this species is believed to be ubiquinone. Couples the redox reaction to proton translocation (for every two electrons transferred, four hydrogen ions are translocated across the cytoplasmic membrane), and thus conserves the redox energy in a proton gradient. The protein is NADH-quinone oxidoreductase subunit K of Baumannia cicadellinicola subsp. Homalodisca coagulata.